A 143-amino-acid chain; its full sequence is Nucleoside diphosphate kinase (143 aa).

ATP-binding residues include Lys11, Phe59, Arg87, Thr93, Arg104, and Asn114. Catalysis depends on His117, which acts as the Pros-phosphohistidine intermediate.

The protein belongs to the NDK family. Homotetramer. It depends on Mg(2+) as a cofactor.

It localises to the cytoplasm. The enzyme catalyses a 2'-deoxyribonucleoside 5'-diphosphate + ATP = a 2'-deoxyribonucleoside 5'-triphosphate + ADP. It catalyses the reaction a ribonucleoside 5'-diphosphate + ATP = a ribonucleoside 5'-triphosphate + ADP. Functionally, major role in the synthesis of nucleoside triphosphates other than ATP. The ATP gamma phosphate is transferred to the NDP beta phosphate via a ping-pong mechanism, using a phosphorylated active-site intermediate. The polypeptide is Nucleoside diphosphate kinase (Shewanella woodyi (strain ATCC 51908 / MS32)).